The following is a 673-amino-acid chain: Glycine--tRNA ligase beta subunit (673 aa).

This sequence belongs to the class-II aminoacyl-tRNA synthetase family. Tetramer of two alpha and two beta subunits.

It is found in the cytoplasm. The enzyme catalyses tRNA(Gly) + glycine + ATP = glycyl-tRNA(Gly) + AMP + diphosphate. The chain is Glycine--tRNA ligase beta subunit from Lactococcus lactis subsp. cremoris (strain SK11).